The primary structure comprises 369 residues: uncharacterized protein (369 aa).

N6-(pyridoxal phosphate)lysine is present on Lys-184.

This sequence belongs to the class-V pyridoxal-phosphate-dependent aminotransferase family. The cofactor is pyridoxal 5'-phosphate.

This is an uncharacterized protein from Helicobacter pylori (strain ATCC 700392 / 26695) (Campylobacter pylori).